The sequence spans 156 residues: MSRKKRYFKTVILNDPKFGSYIIAKFISYIMNNGKKNLAQKIFYYSISIISIRLNKNPFILIKKILYNVQPDFEIKKKKIGGSVYKIPIKINLKRSLMFSMKWIVKNSKLRNENGYKNKLVGELIDSYYNNSLSTKQKDELNKIIDQNKAYSNFKI.

It belongs to the universal ribosomal protein uS7 family. As to quaternary structure, part of the 30S ribosomal subunit. Contacts proteins S9 and S11.

One of the primary rRNA binding proteins, it binds directly to 16S rRNA where it nucleates assembly of the head domain of the 30S subunit. Is located at the subunit interface close to the decoding center, probably blocks exit of the E-site tRNA. The protein is Small ribosomal subunit protein uS7 of Carsonella ruddii.